The sequence spans 258 residues: MAVISMKQLLEAGVHFGHQTRRWNPKMAKYIFTERNGIHVIDLQQTVKLADQAYEFIRDAAANDAVILFVGTKKQAAEAVKDEAIRAGQYFINHRWLGGTLTNWGTIQKRIARLKEINRMEEDGTFEVLPKKEVALLNKQRARLEKFLGGIADMPRIPDVMFVVDPHKEQIAVKEAKKLGIPVVAMVDTNTDPDDIDVIIPANDDAIRAVKLITAKMADAIIEGNQGEDSVAAVEAELAAEPASTESIEELVEVVEGK.

Belongs to the universal ribosomal protein uS2 family.

The protein is Small ribosomal subunit protein uS2 of Streptococcus suis (strain 98HAH33).